Consider the following 180-residue polypeptide: Inner membrane-spanning protein YciB (180 aa).

The next 5 membrane-spanning stretches (helical) occupy residues 22 to 42 (IFVASGALIVATLLALAFTWF), 50 to 70 (MTLVTAIMVLVFGTLTLAFHS), 72 to 92 (LFIKWKVTVLYVLFAVALLVS), 121 to 141 (MSWAVFFLVCGLLNIYVAFWL), and 149 to 169 (FKVFGLTALTLVFTLISGVYI).

It belongs to the YciB family.

The protein resides in the cell inner membrane. Functionally, plays a role in cell envelope biogenesis, maintenance of cell envelope integrity and membrane homeostasis. The sequence is that of Inner membrane-spanning protein YciB from Yersinia enterocolitica serotype O:8 / biotype 1B (strain NCTC 13174 / 8081).